A 64-amino-acid polypeptide reads, in one-letter code: Alpha-conotoxin SI (64 aa).

A signal peptide spans 1–21; the sequence is MGMRMMFTVFLLVVLATTVVS. Positions 22–49 are excised as a propeptide; the sequence is FPSDRASDGRDDEAKDERSDMHESDRKE. Positions 23-47 are disordered; the sequence is PSDRASDGRDDEAKDERSDMHESDR. The span at 26-47 shows a compositional bias: basic and acidic residues; the sequence is RASDGRDDEAKDERSDMHESDR. Cystine bridges form between cysteine 51-cysteine 56 and cysteine 52-cysteine 62. Cysteine 62 is modified (cysteine amide).

It belongs to the conotoxin A superfamily. As to expression, expressed by the venom duct.

Its subcellular location is the secreted. Its function is as follows. Alpha-conotoxins act on postsynaptic membranes, they bind to the nicotinic acetylcholine receptors (nAChR) and thus inhibit them. Is active on muscle nAChR (IC(50)=113 nM on adult subtype (alpha-1-beta-1-gamma-delta/CHRNA1-CHRNB1-CHRNG-CHRND) and IC(50)=142 nM on fetal subtype (alpha-1-beta-1-delta-epsilon/CHRNA1-CHRNB1-CHRND-CHRNE)). On mice muscle receptors, its higher affinity site is the alpha/delta nAChR subunit interface. On Torpedo receptors, it does not distinguish between alpha/delta and alpha/gamma acetylcholine-binding sites. In vivo, causes paralysis followed by death when injected into goldfish. In contrast, has no effect on mice, when similar doses are intraperitoneally or intracerebrally injected. This is Alpha-conotoxin SI from Conus striatus (Striated cone).